A 318-amino-acid chain; its full sequence is Potassium channel subfamily K member 15 (318 aa).

Residues 1–8 (MRKQSART) are Cytoplasmic-facing. The chain crosses the membrane as a helical span at residues 9–29 (AALILCILSYLLVGAAVFDAL). Residues 80–101 (FAGSFYFAITVITTIGYGHAAP) constitute an intramembrane region (pore-forming). Residues 108 to 128 (VFCMFYALLGIPLTLVTFQSL) form a helical membrane-spanning segment. The Cytoplasmic segment spans residues 129 to 158 (GERLNALVRCLLLAAKRCLGLRRPHVSAEN). A helical transmembrane segment spans residues 159 to 179 (MVVAGLLLCAATLALGAAAFA). Residues 189 to 209 (AYYYCFITLTTIGFGDFVALQ) constitute an intramembrane region (pore-forming). The helical transmembrane segment at 223–243 (FSFLYILLGLTVIGAFLNLVV) threads the bilayer. At 244–318 (LRFLASAEAP…DRLRARRKSI (75 aa)) the chain is on the cytoplasmic side. Residues 296 to 318 (LSPEAVHDCHSSPDRLRARRKSI) are disordered. The segment covering 300–311 (AVHDCHSSPDRL) has biased composition (basic and acidic residues).

This sequence belongs to the two pore domain potassium channel (TC 1.A.1.8) family. As to quaternary structure, heterodimer. Post-translationally, phosphorylated. In terms of tissue distribution, brain-specific. Highly expressed in auditory nuclei, in Purkinje cells and in olfactory bulb mitral cells.

Its subcellular location is the membrane. Probable potassium channel subunit. No channel activity observed in heterologous systems. May need to associate with another protein to form a functional channel. The chain is Potassium channel subfamily K member 15 (Kcnk15) from Rattus norvegicus (Rat).